The sequence spans 96 residues: MSAVTRCEDGLVLRLYIQPKASRDSIVGLHGDEVKVAITAPPVDGQANSHLIKFLGKQFRVAKSQIVIEKGELGRHKQVKIIHPQQIPPEITALTE.

This sequence belongs to the UPF0235 family.

The protein is UPF0235 protein YggU of Salmonella agona (strain SL483).